Consider the following 795-residue polypeptide: Copper-exporting P-type ATPase (795 aa).

2 HMA domains span residues 5-70 (QNAT…YDVV) and 72-138 (DKAE…YDAQ). Positions 16, 19, 83, and 86 each coordinate Cu(+). 6 consecutive transmembrane segments (helical) span residues 161–181 (LMISTILSLPLLMTMLVHLFN), 187–207 (ILMNPWFQFILATPIQFIIGW), 224–244 (MDVLVALGTSAAYFYSIYEMI), 256–276 (LYFETSAVLITLILFGKYLEA), 412–432 (YFVPIVIAIALLTFLIWITLV), and 440–460 (ALVAAISVLVIACPCALGLAT). Aspartate 496 acts as the 4-aspartylphosphate intermediate in catalysis. Positions 690 and 694 each coordinate Mg(2+). Transmembrane regions (helical) follow at residues 747–764 (NLFWAFGYNIAGIPIAAM) and 770–788 (WIAGAAMALSSVSVVSNAL).

This sequence belongs to the cation transport ATPase (P-type) (TC 3.A.3) family. Type IB subfamily.

The protein localises to the cell membrane. It carries out the reaction Cu(+)(in) + ATP + H2O = Cu(+)(out) + ADP + phosphate + H(+). Involved in copper export. In Staphylococcus haemolyticus (strain JCSC1435), this protein is Copper-exporting P-type ATPase (copA).